Reading from the N-terminus, the 332-residue chain is D-alanine--D-alanine ligase (332 aa).

The segment covering 1-17 has biased composition (polar residues); that stretch reads MPMTMTQSATNPTATPV. Residues 1-28 are disordered; it reads MPMTMTQSATNPTATPVSANKASANAAT. Residues 18-28 are compositionally biased toward low complexity; sequence SANKASANAAT. The 198-residue stretch at 132 to 329 folds into the ATP-grasp domain; that stretch reads KQLWHGCGLS…FEQLCWHILA (198 aa). 158–213 provides a ligand contact to ATP; that stretch reads VNTLGLPLIVKPVHEGSSIGMSKVNTLDELPKAYEVAAGCGDVVMAEKWITGREFT. Asp-283, Glu-296, and Asn-298 together coordinate Mg(2+).

It belongs to the D-alanine--D-alanine ligase family. Requires Mg(2+) as cofactor. Mn(2+) serves as cofactor.

It is found in the cytoplasm. It catalyses the reaction 2 D-alanine + ATP = D-alanyl-D-alanine + ADP + phosphate + H(+). The protein operates within cell wall biogenesis; peptidoglycan biosynthesis. Cell wall formation. In Psychrobacter sp. (strain PRwf-1), this protein is D-alanine--D-alanine ligase.